A 457-amino-acid polypeptide reads, in one-letter code: Zinc finger protein ZIPIC (457 aa).

The region spanning 3-84 (CCICQFSVRV…ILELIHSPYM (82 aa)) is the ZAD domain. 6 C2H2-type zinc fingers span residues 257–280 (IQCP…KREH), 284–306 (YVCD…LQNH), 312–334 (FACP…MAWH), 340–362 (YQCD…KMIH), 369–391 (LECQ…MRSH), and 397–419 (FACP…LREH). Residues 430–448 (FHCSKCTHTFINEQNYDAH) form a C2H2-type 7; degenerate zinc finger.

Interacts (via region between the ZAD domain and the first zinc finger domain) with Cp190 (via centrosomal targeting M domain); the interaction is direct. Interacts with pita.

The protein localises to the nucleus. It localises to the chromosome. In terms of biological role, insulator DNA-binding protein. Recruits Cp190 and cooperatively binds to chromatin promoter regions to exert transcriptional regulator and chromatin insulator functions. Chromatin insulators are regulatory elements that establish independent domains of transcriptional activity within eukaryotic genomes. Insulators are proposed to structure the chromatin fiber into independent domains of differing transcriptional potential by promoting the formation of distinct chromatin loops to form topologically associating domains (TADs). Chromatin binding sites often cluster with those of other insulator DNA-binding proteins such as pita, CTCF and BEAF-32, but not Su(Hw). The polypeptide is Zinc finger protein ZIPIC (Drosophila melanogaster (Fruit fly)).